The sequence spans 592 residues: Probable 6-phosphofructo-2-kinase C222.13c (592 aa).

The interval 1 to 80 is disordered; it reads MSNTGSARTE…PANDVEKMEV (80 aa). Residues 57–66 are compositionally biased toward basic and acidic residues; the sequence is SIFKREELTP. 150–157 contacts ATP; it reads GIPATGKS. Residues Asp235 and Cys266 contribute to the active site. Arg300 contributes to the beta-D-fructose 6-phosphate binding site. The Proton donor role is filled by His527.

It is found in the cytoplasm. It localises to the nucleus. The enzyme catalyses beta-D-fructose 6-phosphate + ATP = beta-D-fructose 2,6-bisphosphate + ADP + H(+). Its function is as follows. Synthesis of fructose 2,6-bisphosphate. The chain is Probable 6-phosphofructo-2-kinase C222.13c from Schizosaccharomyces pombe (strain 972 / ATCC 24843) (Fission yeast).